Reading from the N-terminus, the 367-residue chain is Ribosomal lysine N-methyltransferase 5 (367 aa).

The disordered stretch occupies residues Glu-55 to Glu-74. The segment covering Arg-58 to Lys-68 has biased composition (basic residues). S-adenosyl-L-methionine is bound by residues Trp-110, Gly-170–Gly-172, Asp-192, Trp-256, and Met-288.

The protein belongs to the class I-like SAM-binding methyltransferase superfamily. RKM5 family.

S-adenosyl-L-methionine-dependent protein-lysine N-methyltransferase that monomethylates 60S ribosomal protein L1 (RPL1A and RPL1B) at 'Lys-46'. The protein is Ribosomal lysine N-methyltransferase 5 (RKM5) of Saccharomyces cerevisiae (strain VIN 13) (Baker's yeast).